A 23-amino-acid polypeptide reads, in one-letter code: Cytochrome c oxidase subunit 7A-liver, mitochondrial (23 aa).

The protein belongs to the cytochrome c oxidase VIIa family. As to quaternary structure, component of the cytochrome c oxidase (complex IV, CIV), a multisubunit enzyme composed of 14 subunits. The complex is composed of a catalytic core of 3 subunits MT-CO1, MT-CO2 and MT-CO3, encoded in the mitochondrial DNA, and 11 supernumerary subunits COX4I, COX5A, COX5B, COX6A, COX6B, COX6C, COX7A, COX7B, COX7C, COX8 and NDUFA4, which are encoded in the nuclear genome. The complex exists as a monomer or a dimer and forms supercomplexes (SCs) in the inner mitochondrial membrane with NADH-ubiquinone oxidoreductase (complex I, CI) and ubiquinol-cytochrome c oxidoreductase (cytochrome b-c1 complex, complex III, CIII), resulting in different assemblies (supercomplex SCI(1)III(2)IV(1) and megacomplex MCI(2)III(2)IV(2)).

Its subcellular location is the mitochondrion inner membrane. It functions in the pathway energy metabolism; oxidative phosphorylation. In terms of biological role, component of the cytochrome c oxidase, the last enzyme in the mitochondrial electron transport chain which drives oxidative phosphorylation. The respiratory chain contains 3 multisubunit complexes succinate dehydrogenase (complex II, CII), ubiquinol-cytochrome c oxidoreductase (cytochrome b-c1 complex, complex III, CIII) and cytochrome c oxidase (complex IV, CIV), that cooperate to transfer electrons derived from NADH and succinate to molecular oxygen, creating an electrochemical gradient over the inner membrane that drives transmembrane transport and the ATP synthase. Cytochrome c oxidase is the component of the respiratory chain that catalyzes the reduction of oxygen to water. Electrons originating from reduced cytochrome c in the intermembrane space (IMS) are transferred via the dinuclear copper A center (CU(A)) of subunit 2 and heme A of subunit 1 to the active site in subunit 1, a binuclear center (BNC) formed by heme A3 and copper B (CU(B)). The BNC reduces molecular oxygen to 2 water molecules using 4 electrons from cytochrome c in the IMS and 4 protons from the mitochondrial matrix. The sequence is that of Cytochrome c oxidase subunit 7A-liver, mitochondrial from Oncorhynchus mykiss (Rainbow trout).